The primary structure comprises 139 residues: uncharacterized protein (139 aa).

One can recognise an HTH cro/C1-type domain in the interval 8-63; the sequence is LRELRRARKLTVNQLAVYSGISSATISKIENGKRGTPKPATIKKLAAVLKVPYENL. The H-T-H motif DNA-binding region spans 19 to 38; the sequence is VNQLAVYSGISSATISKIEN.

This is an uncharacterized protein from Bacillus subtilis (strain 168).